The chain runs to 295 residues: MDQKQIEEIVRSVMASMGQAAPAPSEAKCATTNCAAPVTSESCALDLGSAEAKAWIGVENPHRADVLTELRRSTVARVCTGRTGPRPRTQALLRFLADHSRSKDTVLKEVPEEWVKAQGLLEVRSEISDKNLYLTRPDMGRRLCAEAVEALKAQCVANPDVQVVISDGLSTDAITVNYEEILPPLMAGLKQAGLKVGTPFFVRYGRVKIEDQIGEILGAKVVILLVGERPGLGQSESLSCYAVYSPRMATTVEADRTCISNIHQGGTPPVEAAAVIVDLAKRMLEQKASGINMTR.

Adenosylcob(III)alamin contacts are provided by Val-207, Glu-228, and Cys-258.

Belongs to the EutC family. The basic unit is a heterodimer which dimerizes to form tetramers. The heterotetramers trimerize; 6 large subunits form a core ring with 6 small subunits projecting outwards. Adenosylcob(III)alamin serves as cofactor.

It localises to the bacterial microcompartment. The enzyme catalyses ethanolamine = acetaldehyde + NH4(+). The protein operates within amine and polyamine degradation; ethanolamine degradation. Functionally, catalyzes the deamination of various vicinal amino-alcohols to oxo compounds. Allows this organism to utilize ethanolamine as the sole source of nitrogen and carbon in the presence of external vitamin B12. This chain is Ethanolamine ammonia-lyase small subunit, found in Shigella sonnei (strain Ss046).